Reading from the N-terminus, the 467-residue chain is Citrate synthase, mitochondrial (467 aa).

Catalysis depends on residues histidine 301 and histidine 347.

This sequence belongs to the citrate synthase family.

It localises to the mitochondrion matrix. It carries out the reaction oxaloacetate + acetyl-CoA + H2O = citrate + CoA + H(+). It participates in carbohydrate metabolism; tricarboxylic acid cycle; isocitrate from oxaloacetate: step 1/2. The protein is Citrate synthase, mitochondrial (CIT) of Candida tropicalis (Yeast).